A 354-amino-acid chain; its full sequence is Tryptophan--tRNA ligase (354 aa).

Residues 13 to 15 (QPT) and 21 to 22 (GN) contribute to the ATP site. The short motif at 14–22 (PTGNLHLGN) is the 'HIGH' region element. L-tryptophan is bound at residue Asp137. Residues 149–151 (GDD), Val208, and 217–221 (KMSKS) each bind ATP. A 'KMSKS' region motif is present at residues 217–221 (KMSKS).

This sequence belongs to the class-I aminoacyl-tRNA synthetase family. Homodimer.

The protein resides in the cytoplasm. It carries out the reaction tRNA(Trp) + L-tryptophan + ATP = L-tryptophyl-tRNA(Trp) + AMP + diphosphate + H(+). Its function is as follows. Catalyzes the attachment of tryptophan to tRNA(Trp). The sequence is that of Tryptophan--tRNA ligase from Agrobacterium fabrum (strain C58 / ATCC 33970) (Agrobacterium tumefaciens (strain C58)).